The sequence spans 266 residues: 3-methyl-2-oxobutanoate hydroxymethyltransferase (266 aa).

2 residues coordinate Mg(2+): Asp45 and Asp84. Residues 45–46, Asp84, and Lys113 each bind 3-methyl-2-oxobutanoate; that span reads DS. A Mg(2+)-binding site is contributed by Glu115. Glu183 acts as the Proton acceptor in catalysis.

The protein belongs to the PanB family. Homodecamer; pentamer of dimers. Mg(2+) is required as a cofactor.

Its subcellular location is the cytoplasm. The catalysed reaction is 3-methyl-2-oxobutanoate + (6R)-5,10-methylene-5,6,7,8-tetrahydrofolate + H2O = 2-dehydropantoate + (6S)-5,6,7,8-tetrahydrofolate. Its pathway is cofactor biosynthesis; (R)-pantothenate biosynthesis; (R)-pantoate from 3-methyl-2-oxobutanoate: step 1/2. In terms of biological role, catalyzes the reversible reaction in which hydroxymethyl group from 5,10-methylenetetrahydrofolate is transferred onto alpha-ketoisovalerate to form ketopantoate. The sequence is that of 3-methyl-2-oxobutanoate hydroxymethyltransferase from Coxiella burnetii (strain CbuK_Q154) (Coxiella burnetii (strain Q154)).